Consider the following 262-residue polypeptide: Cytochrome c oxidase subunit 2 (262 aa).

2 helical membrane-spanning segments follow: residues 31 to 51 (HIMF…YVII) and 72 to 92 (IIWT…SFIL). 6 residues coordinate Cu cation: histidine 175, cysteine 210, glutamate 212, cysteine 214, histidine 218, and methionine 221. Glutamate 212 contributes to the Mg(2+) binding site.

It belongs to the cytochrome c oxidase subunit 2 family. In terms of assembly, component of the cytochrome c oxidase (complex IV, CIV), a multisubunit enzyme composed of a catalytic core of 3 subunits and several supernumerary subunits. The complex exists as a monomer or a dimer and forms supercomplexes (SCs) in the inner mitochondrial membrane with ubiquinol-cytochrome c oxidoreductase (cytochrome b-c1 complex, complex III, CIII). Cu cation serves as cofactor.

The protein localises to the mitochondrion inner membrane. It carries out the reaction 4 Fe(II)-[cytochrome c] + O2 + 8 H(+)(in) = 4 Fe(III)-[cytochrome c] + 2 H2O + 4 H(+)(out). Functionally, component of the cytochrome c oxidase, the last enzyme in the mitochondrial electron transport chain which drives oxidative phosphorylation. The respiratory chain contains 3 multisubunit complexes succinate dehydrogenase (complex II, CII), ubiquinol-cytochrome c oxidoreductase (cytochrome b-c1 complex, complex III, CIII) and cytochrome c oxidase (complex IV, CIV), that cooperate to transfer electrons derived from NADH and succinate to molecular oxygen, creating an electrochemical gradient over the inner membrane that drives transmembrane transport and the ATP synthase. Cytochrome c oxidase is the component of the respiratory chain that catalyzes the reduction of oxygen to water. Electrons originating from reduced cytochrome c in the intermembrane space (IMS) are transferred via the dinuclear copper A center (CU(A)) of subunit 2 and heme A of subunit 1 to the active site in subunit 1, a binuclear center (BNC) formed by heme A3 and copper B (CU(B)). The BNC reduces molecular oxygen to 2 water molecules using 4 electrons from cytochrome c in the IMS and 4 protons from the mitochondrial matrix. This chain is Cytochrome c oxidase subunit 2 (COX2), found in Candida albicans (strain SC5314 / ATCC MYA-2876) (Yeast).